The following is a 245-amino-acid chain: Ribonuclease 3 (245 aa).

Residues 17–146 (FTDKMKSLGL…FVGALYLDQG (130 aa)) form the RNase III domain. Position 59 (Glu59) interacts with Mg(2+). Asp63 is a catalytic residue. Positions 132 and 135 each coordinate Mg(2+). Glu135 is an active-site residue. One can recognise a DRBM domain in the interval 172–241 (DFKTQFQEYV…AEQAYKLMKN (70 aa)).

Belongs to the ribonuclease III family. As to quaternary structure, homodimer. Mg(2+) serves as cofactor.

It is found in the cytoplasm. It carries out the reaction Endonucleolytic cleavage to 5'-phosphomonoester.. Digests double-stranded RNA. Involved in the processing of primary rRNA transcript to yield the immediate precursors to the large and small rRNAs (23S and 16S). Processes some mRNAs, and tRNAs when they are encoded in the rRNA operon. Processes pre-crRNA and tracrRNA of type II CRISPR loci if present in the organism. The sequence is that of Ribonuclease 3 from Staphylococcus epidermidis (strain ATCC 35984 / DSM 28319 / BCRC 17069 / CCUG 31568 / BM 3577 / RP62A).